A 469-amino-acid chain; its full sequence is GTPase Der (469 aa).

2 EngA-type G domains span residues 3-167 (PTVA…PDEV) and 175-348 (PKFA…RAAM). GTP is bound by residues 9–16 (GRPNVGKS), 56–60 (DTGGF), 119–122 (NKAE), 181–188 (GRPNVGKS), 228–232 (DTAGV), and 293–296 (NKWD). Positions 349–433 (SKLATPKLTR…PLRVQYKSSE (85 aa)) constitute a KH-like domain. The interval 429–469 (YKSSENPFDNDEKDKPRAKPKPMSKMRGREKEVRYGKNSKK) is disordered.

It belongs to the TRAFAC class TrmE-Era-EngA-EngB-Septin-like GTPase superfamily. EngA (Der) GTPase family. As to quaternary structure, associates with the 50S ribosomal subunit.

GTPase that plays an essential role in the late steps of ribosome biogenesis. This Chromobacterium violaceum (strain ATCC 12472 / DSM 30191 / JCM 1249 / CCUG 213 / NBRC 12614 / NCIMB 9131 / NCTC 9757 / MK) protein is GTPase Der.